A 532-amino-acid chain; its full sequence is Cyclin-L1 (532 aa).

Cyclin-like regions lie at residues 94–196 and 209–293; these read ELIQ…RVLK and KIIV…ETLR. T331 bears the Phosphothreonine mark. Positions 332-532 are disordered; the sequence is PALSTLGGFS…SRSGHGRHRR (201 aa). A phosphoserine mark is found at S341 and S344. Residues K345 and K353 each participate in a glycyl lysine isopeptide (Lys-Gly) (interchain with G-Cter in SUMO2) cross-link. Residues 348–358 show a composition bias toward basic and acidic residues; sequence SPREVKAEEKS. Phosphoserine occurs at positions 358 and 361. The span at 367-376 shows a compositional bias: basic and acidic residues; it reads VKKEPEDRQQ. K368 participates in a covalent cross-link: Glycyl lysine isopeptide (Lys-Gly) (interchain with G-Cter in SUMO2). S380 bears the Phosphoserine mark. Basic residues-rich tracts occupy residues 388–424, 444–458, 466–482, and 492–504; these read DSKR…RRSR, RRHH…KAKH, SNRH…RSQS, and KKHR…HRDR. An RS region spans residues 396 to 438; that stretch reads RSASRSRSRTRSRSRSHSPRRHYNNRRSRSGTYSSRSRSRSRS. S451 is modified (phosphoserine). Over residues 505–514 the composition is skewed to basic and acidic residues; sequence RERSRSFERS. A compositionally biased stretch (basic residues) spans 515 to 532; that stretch reads HKGKHHGGSRSGHGRHRR.

The protein belongs to the cyclin family. Cyclin L subfamily. As to quaternary structure, interacts with POLR2A via its hyperphosphorylated C-terminal domain (CTD). Interacts with CDK11A, CDK11B, CDK12 and CDK13. May form a ternary complex with CDK11B and casein kinase II (CKII). Interacts with pre-mRNA-splicing factors, including at least SRSF1, SRSF2 and SRSF7/SLU7. In terms of tissue distribution, widely expressed (at protein level).

It localises to the nucleus speckle. The protein localises to the nucleus. Its subcellular location is the nucleoplasm. It is found in the cytoplasm. Involved in pre-mRNA splicing. Functions in association with cyclin-dependent kinases (CDKs). May play a role in the regulation of RNA polymerase II (pol II). Inhibited by the CDK-specific inhibitor CDKN1A/p21. In Mus musculus (Mouse), this protein is Cyclin-L1 (Ccnl1).